The sequence spans 540 residues: ADP,ATP carrier protein 2 (540 aa).

11 helical membrane-spanning segments follow: residues 24 to 44 (FSKF…YCLL), 62 to 82 (VIPF…TMVY), 94 to 114 (VFYC…VIIY), 151 to 171 (IYYV…FWGL), 223 to 243 (SVML…IWLY), 295 to 315 (LLGL…FEVV), 337 to 357 (ITTL…GQCI), 367 to 387 (LVTP…IFAA), 391 to 411 (ISIF…WTGG), 458 to 478 (SGGS…AASL), and 480 to 500 (VIAL…AYIG).

The protein belongs to the ADP/ATP translocase tlc family.

It localises to the cell membrane. This is ADP,ATP carrier protein 2 (tlcB) from Chlamydia pneumoniae (Chlamydophila pneumoniae).